Consider the following 241-residue polypeptide: 1-(5-phosphoribosyl)-5-[(5-phosphoribosylamino)methylideneamino] imidazole-4-carboxamide isomerase (241 aa).

Residue Asp-10 is the Proton acceptor of the active site. Asp-131 (proton donor) is an active-site residue.

The protein belongs to the HisA/HisF family.

Its subcellular location is the cytoplasm. The catalysed reaction is 1-(5-phospho-beta-D-ribosyl)-5-[(5-phospho-beta-D-ribosylamino)methylideneamino]imidazole-4-carboxamide = 5-[(5-phospho-1-deoxy-D-ribulos-1-ylimino)methylamino]-1-(5-phospho-beta-D-ribosyl)imidazole-4-carboxamide. The protein operates within amino-acid biosynthesis; L-histidine biosynthesis; L-histidine from 5-phospho-alpha-D-ribose 1-diphosphate: step 4/9. The chain is 1-(5-phosphoribosyl)-5-[(5-phosphoribosylamino)methylideneamino] imidazole-4-carboxamide isomerase from Bifidobacterium adolescentis (strain ATCC 15703 / DSM 20083 / NCTC 11814 / E194a).